Consider the following 667-residue polypeptide: Long-chain fatty acid transport protein 3 (667 aa).

A helical transmembrane segment spans residues 3–23 (ALLLLLPLLLLLPLLLKLDVW). The interval 114-144 (TGGRRGSGRGSTEEGARVAPPAGDAAARGTT) is disordered. Over residues 130–144 (RVAPPAGDAAARGTT) the composition is skewed to low complexity. Residues 272 to 276 (TSGTT), His315, Thr412, Asp512, Arg527, and Lys619 contribute to the ATP site.

Belongs to the ATP-dependent AMP-binding enzyme family. In terms of tissue distribution, expressed at high levels in adrenal gland, testis and ovary. Expressed at lower levels in adult brain. Found in adrenal cortical cells, spermatocytes and interstitial cells of the testis, theca cells of the ovary, cerebral cortical neurons, and cerebellar Purkinje cells (at protein level).

It is found in the mitochondrion membrane. It carries out the reaction a fatty acid(in) = a fatty acid(out). It catalyses the reaction a long-chain fatty acid + ATP + CoA = a long-chain fatty acyl-CoA + AMP + diphosphate. The enzyme catalyses (5Z,8Z,11Z,14Z)-eicosatetraenoate + ATP + CoA = (5Z,8Z,11Z,14Z)-eicosatetraenoyl-CoA + AMP + diphosphate. The catalysed reaction is hexadecanoate + ATP + CoA = hexadecanoyl-CoA + AMP + diphosphate. It carries out the reaction (9Z)-octadecenoate + ATP + CoA = (9Z)-octadecenoyl-CoA + AMP + diphosphate. It catalyses the reaction (9Z,12Z)-octadecadienoate + ATP + CoA = (9Z,12Z)-octadecadienoyl-CoA + AMP + diphosphate. The enzyme catalyses a very long-chain fatty acid + ATP + CoA = a very long-chain fatty acyl-CoA + AMP + diphosphate. The catalysed reaction is tetracosanoate + ATP + CoA = tetracosanoyl-CoA + AMP + diphosphate. Mainly functions as an acyl-CoA ligase catalyzing the ATP-dependent formation of fatty acyl-CoA using LCFA and very-long-chain fatty acids (VLCFA) as substrates. Can mediate the levels of long-chain fatty acids (LCFA) in the cell by facilitating their transport across membranes. The sequence is that of Long-chain fatty acid transport protein 3 (Slc27a3) from Mus musculus (Mouse).